A 160-amino-acid polypeptide reads, in one-letter code: Phosphopantetheine adenylyltransferase (160 aa).

A substrate-binding site is contributed by Thr10. ATP is bound by residues 10 to 11 and His18; that span reads TF. Positions 42, 74, and 88 each coordinate substrate. Residues 89–91, Glu99, and 124–130 each bind ATP; these read GLR and NSFISST.

The protein belongs to the bacterial CoaD family. As to quaternary structure, homohexamer. Mg(2+) is required as a cofactor.

It localises to the cytoplasm. It catalyses the reaction (R)-4'-phosphopantetheine + ATP + H(+) = 3'-dephospho-CoA + diphosphate. It functions in the pathway cofactor biosynthesis; coenzyme A biosynthesis; CoA from (R)-pantothenate: step 4/5. In terms of biological role, reversibly transfers an adenylyl group from ATP to 4'-phosphopantetheine, yielding dephospho-CoA (dPCoA) and pyrophosphate. The protein is Phosphopantetheine adenylyltransferase of Photobacterium damsela subsp. piscicida (Pasteurella piscicida).